A 493-amino-acid polypeptide reads, in one-letter code: EGF-containing fibulin-like extracellular matrix protein 1 (493 aa).

The first 17 residues, 1 to 17 (MLKALFLTMLTLALVKS), serve as a signal peptide directing secretion. Residues 26-71 (YTQCTDGYEWDPVRQQCKDIDECDIVPDACKGGMKCVNHYGGYLCL) enclose the EGF-like 1; atypical domain. The 41-residue stretch at 173–213 (DIDECTAGTHNCRADQVCINLRGSFACQCPPGYQKRGEQCV) folds into the EGF-like 2; calcium-binding domain. 15 disulfides stabilise this stretch: cysteine 177–cysteine 190, cysteine 184–cysteine 199, cysteine 201–cysteine 212, cysteine 218–cysteine 228, cysteine 224–cysteine 237, cysteine 239–cysteine 252, cysteine 258–cysteine 268, cysteine 264–cysteine 277, cysteine 279–cysteine 292, cysteine 298–cysteine 309, cysteine 305–cysteine 318, cysteine 320–cysteine 332, cysteine 338–cysteine 350, cysteine 344–cysteine 359, and cysteine 365–cysteine 377. One can recognise an EGF-like 3; calcium-binding domain in the interval 214 to 253 (DIDECTIPPYCHQRCVNTPGSFYCQCSPGFQLAANNYTCV). Asparagine 249 is a glycosylation site (N-linked (GlcNAc...) asparagine). The 40-residue stretch at 254 to 293 (DINECDASNQCAQQCYNILGSFICQCNQGYELSSDRLNCE) folds into the EGF-like 4; calcium-binding domain. The mediates interaction with TIMP3 stretch occupies residues 259-493 (DASNQCAQQC…LTIIVGPFSF (235 aa)). One can recognise an EGF-like 5; calcium-binding domain in the interval 294–333 (DIDECRTSSYLCQYQCVNEPGKFSCMCPQGYQVVRSRTCQ). The region spanning 334–378 (DINECETTNECREDEMCWNYHGGFRCYPRNPCQDPYILTPENRCV) is the EGF-like 6; calcium-binding domain.

This sequence belongs to the fibulin family. In terms of assembly, interacts with ECM1. Interacts with TIMP3.

It is found in the secreted. Its subcellular location is the extracellular space. The protein localises to the extracellular matrix. Functionally, binds EGFR, the EGF receptor, inducing EGFR autophosphorylation and the activation of downstream signaling pathways. May play a role in cell adhesion and migration. May function as a negative regulator of chondrocyte differentiation. In the olfactory epithelium, it may regulate glial cell migration, differentiation and the ability of glial cells to support neuronal neurite outgrowth. This Macaca fascicularis (Crab-eating macaque) protein is EGF-containing fibulin-like extracellular matrix protein 1 (EFEMP1).